Here is a 646-residue protein sequence, read N- to C-terminus: Rho guanine nucleotide exchange factor 7 (646 aa).

The region spanning 6 to 65 (NSQLVVRAKFNFQQTNEDELSFSKGDVIHVTRVEEGGWWEGTHNGRTGWFPSNYVREIKP) is the SH3 domain. A phosphoserine mark is found at S7, S71, and S79. A DH domain is found at 93–273 (YYNVVLQNIL…KNLSAQCQEV (181 aa)). The PH domain maps to 295 to 400 (DIKTLGSVTY…WVEHLQRQTK (106 aa)). At S340 the chain carries Phosphoserine. Disordered regions lie at residues 402 to 464 (TSVS…GPLE) and 500 to 520 (KTMK…DEEF). Residues 415–428 (PSHTLPSHPLTPSS) show a composition bias toward polar residues. A compositionally biased stretch (basic residues) spans 500–512 (KTMKKLLPKRKPE). Phosphoserine occurs at positions 516 and 560.

In terms of assembly, interacts with SCRIB; interaction is direct and may play a role in regulation of apoptosis. Interacts with PAK kinases through the SH3 domain. Interacts with GIT1 and probably TGFB1I1. Interacts with ITCH and PARVB. Interacts with FRMPD4 (via N-terminus). Interacts with CaMK1. Interacts with PTK2/FAK1 and RAC1. Interacts with BIN2. Interacts with YWHAZ. Interacts (via PH domain) with NOX1 (via FAD-binding FR-type domain). Phosphorylated on Ser-516 by CaMK1; enhancement of GEF activity and downstream activation of RAC1. Phosphorylated by PTK2/FAK1; this promotes interaction with RAC1.

It is found in the cell junction. The protein localises to the focal adhesion. The protein resides in the cell projection. Its subcellular location is the ruffle. It localises to the cytoplasm. It is found in the cell cortex. The protein localises to the lamellipodium. Its function is as follows. Acts as a RAC1 guanine nucleotide exchange factor (GEF) and can induce membrane ruffling. Functions in cell migration, attachment and cell spreading. Promotes targeting of RAC1 to focal adhesions. May function as a positive regulator of apoptosis. Downstream of NMDA receptors and CaMKK-CaMK1 signaling cascade, promotes the formation of spines and synapses in hippocampal neurons. The chain is Rho guanine nucleotide exchange factor 7 (Arhgef7) from Rattus norvegicus (Rat).